The chain runs to 352 residues: DNA integrity scanning protein DisA (352 aa).

Residues 3–143 form the DAC domain; the sequence is PQELIEKIKL…NYKYVVNQVD (141 aa). ATP is bound by residues Gly-71, Leu-89, and 102 to 106; that span reads TRHRT.

The protein belongs to the DisA family. In terms of assembly, homooctamer. It depends on Mg(2+) as a cofactor.

The catalysed reaction is 2 ATP = 3',3'-c-di-AMP + 2 diphosphate. Functionally, participates in a DNA-damage check-point. DisA forms globular foci that rapidly scan along the chromosomes searching for lesions. Its function is as follows. Also has diadenylate cyclase activity, catalyzing the condensation of 2 ATP molecules into cyclic di-AMP (c-di-AMP). c-di-AMP likely acts as a signaling molecule that may couple DNA integrity with a cellular process. The protein is DNA integrity scanning protein DisA of Thermotoga petrophila (strain ATCC BAA-488 / DSM 13995 / JCM 10881 / RKU-1).